Reading from the N-terminus, the 493-residue chain is Probable cytosol aminopeptidase (493 aa).

2 residues coordinate Mn(2+): Lys-262 and Asp-267. Residue Lys-274 is part of the active site. The Mn(2+) site is built by Asp-286, Asp-345, and Glu-347. The active site involves Arg-349.

The protein belongs to the peptidase M17 family. Requires Mn(2+) as cofactor.

The protein resides in the cytoplasm. The catalysed reaction is Release of an N-terminal amino acid, Xaa-|-Yaa-, in which Xaa is preferably Leu, but may be other amino acids including Pro although not Arg or Lys, and Yaa may be Pro. Amino acid amides and methyl esters are also readily hydrolyzed, but rates on arylamides are exceedingly low.. It catalyses the reaction Release of an N-terminal amino acid, preferentially leucine, but not glutamic or aspartic acids.. In terms of biological role, presumably involved in the processing and regular turnover of intracellular proteins. Catalyzes the removal of unsubstituted N-terminal amino acids from various peptides. The protein is Probable cytosol aminopeptidase of Cyanothece sp. (strain PCC 7425 / ATCC 29141).